The sequence spans 453 residues: Tubulin gamma chain (453 aa).

Residue 142-148 (AGGTGSG) coordinates GTP.

The protein belongs to the tubulin family.

Its subcellular location is the cytoplasm. It is found in the cytoskeleton. The protein localises to the microtubule organizing center. The protein resides in the spindle pole body. Functionally, tubulin is the major constituent of microtubules. The gamma chain is found at microtubule organizing centers (MTOC) such as the spindle poles or the centrosome, suggesting that it is involved in the minus-end nucleation of microtubule assembly. This chain is Tubulin gamma chain (TUB4), found in Coprinopsis cinerea (strain Okayama-7 / 130 / ATCC MYA-4618 / FGSC 9003) (Inky cap fungus).